Here is a 251-residue protein sequence, read N- to C-terminus: Appressoria-specific virulence factor GAS1 (251 aa).

The first 21 residues, 1–21 (MSLKSLIAATILAAPLVAGHG), serve as a signal peptide directing secretion. Positions 40-76 (VTSTPRDGTRRDPFQQDSTRFKGQQADTFGETVGGGQ) are disordered. The span at 54 to 66 (QQDSTRFKGQQAD) shows a compositional bias: polar residues.

It is found in the cytoplasm. Appressoria-specific virulence factor required for appressorial penetration in host and lesion development. This chain is Appressoria-specific virulence factor GAS1, found in Pyricularia oryzae (strain 70-15 / ATCC MYA-4617 / FGSC 8958) (Rice blast fungus).